The chain runs to 440 residues: Trigger factor (440 aa).

In terms of domain architecture, PPIase FKBP-type spans 163-248 (GDGVTVDFEG…VKKIESAHLP (86 aa)).

It belongs to the FKBP-type PPIase family. Tig subfamily.

It is found in the cytoplasm. It catalyses the reaction [protein]-peptidylproline (omega=180) = [protein]-peptidylproline (omega=0). Functionally, involved in protein export. Acts as a chaperone by maintaining the newly synthesized protein in an open conformation. Functions as a peptidyl-prolyl cis-trans isomerase. This chain is Trigger factor, found in Verminephrobacter eiseniae (strain EF01-2).